Reading from the N-terminus, the 339-residue chain is Serine/arginine-rich splicing factor 6 (339 aa).

In terms of domain architecture, RRM 1 spans 2–72; the sequence is PRVYIGRLSY…ERVIVEHARG (71 aa). Phosphoserine is present on residues Ser45, Ser81, and Ser84. Residues 75-103 form a disordered region; it reads RDRDGYSYGSRSGGGGYSSRRTSGRDKYG. An RRM 2 domain is found at 110 to 183; the sequence is YRLIVENLSS…RNIRLIEDKP (74 aa). Residue Lys165 is modified to N6-acetyllysine. Residues 176–339 are disordered; the sequence is IRLIEDKPRT…RSRSRSSSRD (164 aa). Lys182 is covalently cross-linked (Glycyl lysine isopeptide (Lys-Gly) (interchain with G-Cter in SUMO2)). A compositionally biased stretch (basic residues) spans 185-250; it reads TSHRRSYSGS…RKSRSKSKSK (66 aa). The span at 280 to 291 shows a compositional bias: basic and acidic residues; the sequence is SPKENGKGDIKS. Residues Ser297 and Ser299 each carry the phosphoserine modification. The residue at position 303 (Ser303) is a Phosphoserine; by DYRK1A. Phosphoserine is present on residues Ser314 and Ser316. Residues 321 to 339 show a composition bias toward basic residues; sequence RASRSRSRSRSRSRSSSRD.

Belongs to the splicing factor SR family. As to quaternary structure, binds SREK1/SFRS12. Interacts with DYRK1A. Interacts with RBMY; the interaction inhibits SRSF6 pre-mRNA splicing. Post-translationally, extensively phosphorylated on serine residues in the RS domain. Phosphorylated by DYRK1A, probably in the RS domain. Phosphorylation by DYRK1A modulates alternative splice site selection and inhibits the expression of MAPT/Tau exon 10.

It is found in the nucleus. The protein localises to the nucleus speckle. In terms of biological role, plays a role in constitutive splicing and modulates the selection of alternative splice sites. Plays a role in the alternative splicing of MAPT/Tau exon 10. Binds to alternative exons of TNC pre-mRNA and promotes the expression of alternatively spliced TNC. Plays a role in wound healing and in the regulation of keratinocyte differentiation and proliferation via its role in alternative splicing. This Mus musculus (Mouse) protein is Serine/arginine-rich splicing factor 6 (Srsf6).